Here is a 206-residue protein sequence, read N- to C-terminus: Probable nicotinate-nucleotide adenylyltransferase (206 aa).

The protein belongs to the NadD family.

It carries out the reaction nicotinate beta-D-ribonucleotide + ATP + H(+) = deamido-NAD(+) + diphosphate. The protein operates within cofactor biosynthesis; NAD(+) biosynthesis; deamido-NAD(+) from nicotinate D-ribonucleotide: step 1/1. Functionally, catalyzes the reversible adenylation of nicotinate mononucleotide (NaMN) to nicotinic acid adenine dinucleotide (NaAD). The chain is Probable nicotinate-nucleotide adenylyltransferase from Gloeobacter violaceus (strain ATCC 29082 / PCC 7421).